The chain runs to 490 residues: Aspartyl/glutamyl-tRNA(Asn/Gln) amidotransferase subunit B (490 aa).

Belongs to the GatB/GatE family. GatB subfamily. As to quaternary structure, heterotrimer of A, B and C subunits.

The catalysed reaction is L-glutamyl-tRNA(Gln) + L-glutamine + ATP + H2O = L-glutaminyl-tRNA(Gln) + L-glutamate + ADP + phosphate + H(+). It carries out the reaction L-aspartyl-tRNA(Asn) + L-glutamine + ATP + H2O = L-asparaginyl-tRNA(Asn) + L-glutamate + ADP + phosphate + 2 H(+). Its function is as follows. Allows the formation of correctly charged Asn-tRNA(Asn) or Gln-tRNA(Gln) through the transamidation of misacylated Asp-tRNA(Asn) or Glu-tRNA(Gln) in organisms which lack either or both of asparaginyl-tRNA or glutaminyl-tRNA synthetases. The reaction takes place in the presence of glutamine and ATP through an activated phospho-Asp-tRNA(Asn) or phospho-Glu-tRNA(Gln). The polypeptide is Aspartyl/glutamyl-tRNA(Asn/Gln) amidotransferase subunit B (Burkholderia thailandensis (strain ATCC 700388 / DSM 13276 / CCUG 48851 / CIP 106301 / E264)).